Reading from the N-terminus, the 447-residue chain is Pyruvate kinase (447 aa).

Arginine 33 serves as a coordination point for substrate. K(+) is bound by residues asparagine 35, serine 37, and aspartate 61. 35 to 38 (NMSH) contacts ATP. Arginine 68 lines the ATP pocket. Glutamate 203 provides a ligand contact to Mg(2+). Substrate is bound by residues glycine 226, aspartate 227, and threonine 259. Aspartate 227 is a binding site for Mg(2+).

It belongs to the pyruvate kinase family. Homotetramer. Requires Mg(2+) as cofactor. K(+) is required as a cofactor.

It carries out the reaction pyruvate + ATP = phosphoenolpyruvate + ADP + H(+). It functions in the pathway carbohydrate degradation; glycolysis; pyruvate from D-glyceraldehyde 3-phosphate: step 5/5. The polypeptide is Pyruvate kinase (Methanocaldococcus jannaschii (strain ATCC 43067 / DSM 2661 / JAL-1 / JCM 10045 / NBRC 100440) (Methanococcus jannaschii)).